The following is a 330-amino-acid chain: Ribosomal RNA small subunit methyltransferase H (330 aa).

Residues 51–53 (GGH), aspartate 70, aspartate 118, and glutamine 125 each bind S-adenosyl-L-methionine. The segment at 276–330 (STDSTPPGLPVPLPDRQPELRLLTRGAELPTEQETAANPRAASARLRAAERTREP) is disordered. Positions 311 to 321 (AANPRAASARL) are enriched in low complexity.

The protein belongs to the methyltransferase superfamily. RsmH family.

The protein resides in the cytoplasm. It catalyses the reaction cytidine(1402) in 16S rRNA + S-adenosyl-L-methionine = N(4)-methylcytidine(1402) in 16S rRNA + S-adenosyl-L-homocysteine + H(+). In terms of biological role, specifically methylates the N4 position of cytidine in position 1402 (C1402) of 16S rRNA. In Thermobifida fusca (strain YX), this protein is Ribosomal RNA small subunit methyltransferase H.